The chain runs to 359 residues: Aromatic amino acid aminotransferase (359 aa).

A disordered region spans residues 1-42 (MSERKPPYLRSALDSIPPYRPGRKVVGPDGRSAKLSSNESPF). N6-(pyridoxal phosphate)lysine is present on Lys223.

The protein belongs to the class-II pyridoxal-phosphate-dependent aminotransferase family. Homodimer. It depends on pyridoxal 5'-phosphate as a cofactor.

It carries out the reaction an aromatic L-alpha-amino acid + 2-oxoglutarate = an aromatic oxo-acid + L-glutamate. Its function is as follows. Aminotransferase that catalyzes the conversion of aromatic amino acids and 2-oxoglutarate into corresponding aromatic oxo acids and L-glutamate. The polypeptide is Aromatic amino acid aminotransferase (Thermobifida fusca (strain YX)).